Here is a 106-residue protein sequence, read N- to C-terminus: Small ribosomal subunit protein uS10 (106 aa).

The protein belongs to the universal ribosomal protein uS10 family. Part of the 30S ribosomal subunit.

Functionally, involved in the binding of tRNA to the ribosomes. This is Small ribosomal subunit protein uS10 from Synechococcus sp. (strain CC9902).